A 189-amino-acid polypeptide reads, in one-letter code: UPF0340 protein SAG0103 (189 aa).

Belongs to the UPF0340 family.

The polypeptide is UPF0340 protein SAG0103 (Streptococcus agalactiae serotype V (strain ATCC BAA-611 / 2603 V/R)).